The sequence spans 1492 residues: Putative leucine-rich repeat-containing protein DDB_G0290503 (1492 aa).

The region spanning 2–111 is the PH domain; the sequence is SILLEGYLEK…WIEGIKDAIK (110 aa). LRR repeat units follow at residues 123-144, 180-204, 258-284, 329-351, 352-375, 389-413, 439-462, 519-543, 551-575, 579-603, 632-656, 728-752, 806-830, 831-855, 895-919, 927-951, 955-979, 1013-1036, 1044-1068, 1138-1164, and 1210-1232; these read LDGL…IKHL, IKSL…VEKL, QESL…QFEK, KNQF…SIVD, DKLK…EIDN, ISKI…SIDK, LEKL…ILEI, INEL…NQSS, LNQL…IIER, IDQL…NESS, LDEL…NQSS, LKSL…NQDS, INEL…NESS, LIQL…IIER, LNQL…NQSS, NEKL…NESL, FENL…IIDV, LQDL…ELKE, and NAHL…GFNE. The segment at 1272-1292 is disordered; sequence RSSSSSLHQQQQMISPDLSNS. A compositionally biased stretch (low complexity) spans 1274 to 1286; it reads SSSSLHQQQQMIS. LRR repeat units lie at residues 1424–1444 and 1445–1468; these read SSEK…KYFF and AIAR…IFDM.

This is Putative leucine-rich repeat-containing protein DDB_G0290503 from Dictyostelium discoideum (Social amoeba).